The chain runs to 161 residues: Nucleotide-binding protein Lferr_1091 (161 aa).

This sequence belongs to the YajQ family.

Nucleotide-binding protein. In Acidithiobacillus ferrooxidans (strain ATCC 53993 / BNL-5-31) (Leptospirillum ferrooxidans (ATCC 53993)), this protein is Nucleotide-binding protein Lferr_1091.